The following is a 185-amino-acid chain: Probable RNA polymerase sigma-C factor (185 aa).

Positions 52 to 65 (DLTQETFLRAIGAI) match the Polymerase core binding motif. A DNA-binding region (H-T-H motif) is located at residues 149–168 (YADAAAVCGCPVGTIRSRVA).

It belongs to the sigma-70 factor family. ECF subfamily.

Functionally, sigma factors are initiation factors that promote the attachment of RNA polymerase to specific initiation sites and are then released. This is Probable RNA polymerase sigma-C factor (sigC) from Mycobacterium bovis (strain ATCC BAA-935 / AF2122/97).